Reading from the N-terminus, the 476-residue chain is ATP synthase subunit beta, chloroplastic (476 aa).

Position 156-163 (156-163 (GGAGVGKT)) interacts with ATP.

The protein belongs to the ATPase alpha/beta chains family. In terms of assembly, F-type ATPases have 2 components, CF(1) - the catalytic core - and CF(0) - the membrane proton channel. CF(1) has five subunits: alpha(3), beta(3), gamma(1), delta(1), epsilon(1). CF(0) has four main subunits: a(1), b(1), b'(1) and c(9-12).

It is found in the plastid. The protein localises to the chloroplast thylakoid membrane. The enzyme catalyses ATP + H2O + 4 H(+)(in) = ADP + phosphate + 5 H(+)(out). In terms of biological role, produces ATP from ADP in the presence of a proton gradient across the membrane. The catalytic sites are hosted primarily by the beta subunits. The chain is ATP synthase subunit beta, chloroplastic from Fucus vesiculosus (Bladder wrack).